Here is a 173-residue protein sequence, read N- to C-terminus: Methylated-DNA--protein-cysteine methyltransferase (173 aa).

Residue Cys143 is the Nucleophile; methyl group acceptor of the active site.

The protein belongs to the MGMT family.

The protein localises to the cytoplasm. The enzyme catalyses a 6-O-methyl-2'-deoxyguanosine in DNA + L-cysteinyl-[protein] = S-methyl-L-cysteinyl-[protein] + a 2'-deoxyguanosine in DNA. It catalyses the reaction a 4-O-methyl-thymidine in DNA + L-cysteinyl-[protein] = a thymidine in DNA + S-methyl-L-cysteinyl-[protein]. Involved in the cellular defense against the biological effects of O6-methylguanine (O6-MeG) and O4-methylthymine (O4-MeT) in DNA. Repairs the methylated nucleobase in DNA by stoichiometrically transferring the methyl group to a cysteine residue in the enzyme. This is a suicide reaction: the enzyme is irreversibly inactivated. This chain is Methylated-DNA--protein-cysteine methyltransferase, found in Pyrococcus sp. (strain NA2).